The sequence spans 209 residues: DNA ADP-ribosyl transferase (209 aa).

Residues 9-209 (TPIYHITHID…RVCIRKDWYY (201 aa)) enclose the DarT domain. NAD(+) is bound by residues 13 to 15 (HIT), glycine 22, and leucine 30. An NAD(+)-binding element region spans residues 35-53 (SPPKQRSIAYAHIQERRNR). Residues 44–50 (YAHIQER) mediate DNA binding. Arginine 51 serves as a coordination point for NAD(+). Arginine 51 functions as the Proton acceptor in the catalytic mechanism. 3 consecutive DNA-binding regions follow at residues 75–80 (RSPMLY), 145–148 (SYWA), and 154–158 (REKKQ). An ADP-ribosylating turn-turn loop region spans residues 116–160 (TDRHGVLSHARFFRQLEELAQLDWEAIQASYWADPPELREKKQAE). Residue glutamate 160 is part of the active site.

This sequence belongs to the DarT ADP-ribosyltransferase family. In terms of assembly, interacts with cognate antitoxin DarG (via C-terminus); this heterodimeric complex neutralizes the toxic effect of DarT by preventing ssDNA binding to DarT and consequently inactivating the toxin by direct protein-protein interactions.

The catalysed reaction is a thymidine in DNA + NAD(+) = an N-(ADP-alpha-D-ribosyl)-thymidine in DNA + nicotinamide + H(+). Its function is as follows. Toxic component of the hybrid type II/IV toxin-antitoxin (TA) system DarTG, which plays a crucial role in controlling bacterial growth and bacteriophage infection. In case of phage infection, DarT toxin ADP-ribosylates DNA, which inhibits both viral DNA and RNA synthesis and leads to abortive infection. ADP-ribosylates ssDNA on the second thymidine of the consensus sequence 5'-TNTC-3'; the protein does not auto-modify. Arg-51 is highly flexible, allowing it to assume multiple positions in the crystal structures. Its toxic effect is neutralized by cognate antitoxin DarG. This Thermus sp. (strain 2.9) protein is DNA ADP-ribosyl transferase.